Reading from the N-terminus, the 100-residue chain is Urease subunit gamma (100 aa).

Belongs to the urease gamma subunit family. As to quaternary structure, heterotrimer of UreA (gamma), UreB (beta) and UreC (alpha) subunits. Three heterotrimers associate to form the active enzyme.

It localises to the cytoplasm. The enzyme catalyses urea + 2 H2O + H(+) = hydrogencarbonate + 2 NH4(+). The protein operates within nitrogen metabolism; urea degradation; CO(2) and NH(3) from urea (urease route): step 1/1. This Pseudomonas aeruginosa (strain UCBPP-PA14) protein is Urease subunit gamma.